Consider the following 101-residue polypeptide: Small ribosomal subunit protein uS14 (101 aa).

Belongs to the universal ribosomal protein uS14 family. Part of the 30S ribosomal subunit. Contacts proteins S3 and S10.

Binds 16S rRNA, required for the assembly of 30S particles and may also be responsible for determining the conformation of the 16S rRNA at the A site. The sequence is that of Small ribosomal subunit protein uS14 from Chromobacterium violaceum (strain ATCC 12472 / DSM 30191 / JCM 1249 / CCUG 213 / NBRC 12614 / NCIMB 9131 / NCTC 9757 / MK).